We begin with the raw amino-acid sequence, 204 residues long: bMERB domain-containing protein 1 (204 aa).

The bMERB domain maps to 3–150; it reads LKQSLSTHLE…EQEEDKEMAD (148 aa). The disordered stretch occupies residues 162–187; that stretch reads VTKSPASSRAEKKAEPPPSKPTVAKT.

The polypeptide is bMERB domain-containing protein 1 (Homo sapiens (Human)).